A 263-amino-acid chain; its full sequence is uncharacterized protein (263 aa).

Position 31 to 38 (31 to 38 (GPTGSGKT)) interacts with ATP.

This sequence belongs to the CbbQ/NirQ/NorQ/GpvN family.

This is an uncharacterized protein from Staphylococcus aureus (strain USA300).